A 289-amino-acid chain; its full sequence is 4-hydroxy-tetrahydrodipicolinate synthase (289 aa).

Pyruvate is bound at residue T42. Y129 functions as the Proton donor/acceptor in the catalytic mechanism. K157 functions as the Schiff-base intermediate with substrate in the catalytic mechanism. Residue I198 participates in pyruvate binding.

The protein belongs to the DapA family. As to quaternary structure, homotetramer; dimer of dimers.

Its subcellular location is the cytoplasm. It catalyses the reaction L-aspartate 4-semialdehyde + pyruvate = (2S,4S)-4-hydroxy-2,3,4,5-tetrahydrodipicolinate + H2O + H(+). It functions in the pathway amino-acid biosynthesis; L-lysine biosynthesis via DAP pathway; (S)-tetrahydrodipicolinate from L-aspartate: step 3/4. Functionally, catalyzes the condensation of (S)-aspartate-beta-semialdehyde [(S)-ASA] and pyruvate to 4-hydroxy-tetrahydrodipicolinate (HTPA). The sequence is that of 4-hydroxy-tetrahydrodipicolinate synthase from Chlamydia caviae (strain ATCC VR-813 / DSM 19441 / 03DC25 / GPIC) (Chlamydophila caviae).